The sequence spans 212 residues: MSVRVKVCGVTRLSDAVAAWEAGVDALGLNFYPKSPRYLDLPTAAALARTRPPLGTVLGVFVNAAPDTIRETVRACGLTAVQLHGDEPPEACSGYGVPVIKALRVTGPEDVVRARTYVGVGDVAGLLLDGAAPGYGGGGVGFDWSLVAGLAGSGVPVLVAGGLRPSNVAEAVRATRPYGVDVASGVESAPGIKDVEAVRAFVRAAKSINLWE.

It belongs to the TrpF family.

It carries out the reaction N-(5-phospho-beta-D-ribosyl)anthranilate = 1-(2-carboxyphenylamino)-1-deoxy-D-ribulose 5-phosphate. The protein operates within amino-acid biosynthesis; L-tryptophan biosynthesis; L-tryptophan from chorismate: step 3/5. The sequence is that of N-(5'-phosphoribosyl)anthranilate isomerase from Myxococcus xanthus (strain DK1622).